The sequence spans 419 residues: UPF0242 protein TC_0906 (419 aa).

This sequence belongs to the UPF0242 family.

This chain is UPF0242 protein TC_0906, found in Chlamydia muridarum (strain MoPn / Nigg).